The following is a 454-amino-acid chain: Bifunctional protein GlmU (454 aa).

Positions 1-228 are pyrophosphorylase; it reads MTLPLHVVIL…PQDVEGANDP (228 aa). UDP-N-acetyl-alpha-D-glucosamine-binding positions include 10-13, K24, Q76, 81-82, 103-105, G138, E153, N168, and N226; these read LAAG, GT, and YGD. D105 provides a ligand contact to Mg(2+). N226 is a Mg(2+) binding site. Positions 229-249 are linker; the sequence is WQLAQLERAWQLRAARALCLQ. The segment at 250–454 is N-acetyltransferase; the sequence is GVRMADPARV…IEGWERPKKK (205 aa). UDP-N-acetyl-alpha-D-glucosamine-binding residues include R332 and K350. Residue H362 is the Proton acceptor of the active site. UDP-N-acetyl-alpha-D-glucosamine contacts are provided by Y365 and N376. Acetyl-CoA is bound by residues A379, 385–386, S404, A422, and R439; that span reads NY.

This sequence in the N-terminal section; belongs to the N-acetylglucosamine-1-phosphate uridyltransferase family. It in the C-terminal section; belongs to the transferase hexapeptide repeat family. As to quaternary structure, homotrimer. It depends on Mg(2+) as a cofactor.

The protein localises to the cytoplasm. The catalysed reaction is alpha-D-glucosamine 1-phosphate + acetyl-CoA = N-acetyl-alpha-D-glucosamine 1-phosphate + CoA + H(+). It catalyses the reaction N-acetyl-alpha-D-glucosamine 1-phosphate + UTP + H(+) = UDP-N-acetyl-alpha-D-glucosamine + diphosphate. It participates in nucleotide-sugar biosynthesis; UDP-N-acetyl-alpha-D-glucosamine biosynthesis; N-acetyl-alpha-D-glucosamine 1-phosphate from alpha-D-glucosamine 6-phosphate (route II): step 2/2. It functions in the pathway nucleotide-sugar biosynthesis; UDP-N-acetyl-alpha-D-glucosamine biosynthesis; UDP-N-acetyl-alpha-D-glucosamine from N-acetyl-alpha-D-glucosamine 1-phosphate: step 1/1. The protein operates within bacterial outer membrane biogenesis; LPS lipid A biosynthesis. Catalyzes the last two sequential reactions in the de novo biosynthetic pathway for UDP-N-acetylglucosamine (UDP-GlcNAc). The C-terminal domain catalyzes the transfer of acetyl group from acetyl coenzyme A to glucosamine-1-phosphate (GlcN-1-P) to produce N-acetylglucosamine-1-phosphate (GlcNAc-1-P), which is converted into UDP-GlcNAc by the transfer of uridine 5-monophosphate (from uridine 5-triphosphate), a reaction catalyzed by the N-terminal domain. The chain is Bifunctional protein GlmU from Xanthomonas campestris pv. campestris (strain 8004).